Consider the following 221-residue polypeptide: Pectate lyase C (221 aa).

Positions 1–27 (MKKIVSILFMFGLVMGFSQFQPSTVFA) are cleaved as a signal peptide.

Belongs to the polysaccharide lyase 3 family. Ca(2+) is required as a cofactor.

The protein localises to the secreted. It carries out the reaction Eliminative cleavage of (1-&gt;4)-alpha-D-galacturonan to give oligosaccharides with 4-deoxy-alpha-D-galact-4-enuronosyl groups at their non-reducing ends.. It catalyses the reaction Eliminative cleavage of (1-&gt;4)-alpha-D-galacturonan methyl ester to give oligosaccharides with 4-deoxy-6-O-methyl-alpha-D-galact-4-enuronosyl groups at their non-reducing ends.. Its pathway is glycan metabolism; pectin degradation; 2-dehydro-3-deoxy-D-gluconate from pectin: step 2/5. Catalyzes the depolymerization of both polygalacturonate and pectins of methyl esterification degree from 22 to 89%, with an endo mode of action. In contrast to the majority of pectate lyases, displays high activity on highly methylated pectins. Is also able to cleave trigalacturonate to galacturonic acid and unsaturated digalacturonate. The polypeptide is Pectate lyase C (pelC) (Bacillus subtilis (strain 168)).